The primary structure comprises 126 residues: Nascent polypeptide-associated complex protein (126 aa).

The NAC-A/B domain maps to 10–77 (PRMMKQMQKM…AKKVAKEEEK (68 aa)).

It belongs to the NAC-alpha family. Homodimer. Interacts with the ribosome. Binds ribosomal RNA.

Contacts the emerging nascent chain on the ribosome. The sequence is that of Nascent polypeptide-associated complex protein from Methanococcus maripaludis (strain C7 / ATCC BAA-1331).